We begin with the raw amino-acid sequence, 670 residues long: Putative segment polarity protein dishevelled homolog DVL1P1 (670 aa).

A DIX domain is found at 1-85 (MAETKIIYHM…RVVSWLVLVE (85 aa)). The tract at residues 89–240 (SDAGSQGTDS…ADRASSFSSM (152 aa)) is disordered. Basic residues predominate over residues 142-151 (SHRRDRARRR). A compositionally biased stretch (basic and acidic residues) spans 152-171 (NREEAARTNGHPRGDRRRDV). Composition is skewed to low complexity over residues 176–192 (DSAS…SSFV) and 201–214 (SRLS…TSSR). Basic residues predominate over residues 215–228 (LIRKHKRRRRKQRL). One can recognise a PDZ domain in the interval 251 to 323 (TVTLNMERHH…NDDAVRVLRE (73 aa)). One can recognise a DEP domain in the interval 400–474 (PDSGLEIRDR…SEQCYYVFGD (75 aa)). Residues 518–642 (PGPPPCFPPA…PGGPPVRELA (125 aa)) form a disordered region. 2 stretches are compositionally biased toward low complexity: residues 526 to 553 (PAYQ…SSGS) and 600 to 614 (SRGS…SYAP).

This sequence belongs to the DSH family. Expressed in thymus, heart, liver, kidney, brain, skeletal muscle, and pancreas.

The protein localises to the cytoplasm. Functionally, may play a role in the signal transduction pathway mediated by multiple Wnt genes. The protein is Putative segment polarity protein dishevelled homolog DVL1P1 (DVL1P1) of Homo sapiens (Human).